The primary structure comprises 446 residues: Adenylosuccinate synthetase (446 aa).

GTP contacts are provided by residues 20–26 (GDEGKGK) and 48–50 (GHT). The active-site Proton acceptor is D21. 2 residues coordinate Mg(2+): D21 and G48. Residues 21 to 24 (DEGK), 46 to 49 (NAGH), T137, R151, Q232, T247, and R319 each bind IMP. H49 serves as the catalytic Proton donor. Position 315 to 321 (315 to 321 (SVTGRPR)) interacts with substrate. GTP-binding positions include R321, 347–349 (KLD), and 429–431 (STG).

Belongs to the adenylosuccinate synthetase family. As to quaternary structure, homodimer. Mg(2+) serves as cofactor.

Its subcellular location is the cytoplasm. The enzyme catalyses IMP + L-aspartate + GTP = N(6)-(1,2-dicarboxyethyl)-AMP + GDP + phosphate + 2 H(+). The protein operates within purine metabolism; AMP biosynthesis via de novo pathway; AMP from IMP: step 1/2. Its function is as follows. Plays an important role in the de novo pathway of purine nucleotide biosynthesis. Catalyzes the first committed step in the biosynthesis of AMP from IMP. The chain is Adenylosuccinate synthetase from Ralstonia nicotianae (strain ATCC BAA-1114 / GMI1000) (Ralstonia solanacearum).